We begin with the raw amino-acid sequence, 177 residues long: Large ribosomal subunit protein uL6 (177 aa).

The protein belongs to the universal ribosomal protein uL6 family. Part of the 50S ribosomal subunit.

This protein binds to the 23S rRNA, and is important in its secondary structure. It is located near the subunit interface in the base of the L7/L12 stalk, and near the tRNA binding site of the peptidyltransferase center. This chain is Large ribosomal subunit protein uL6, found in Methylobacterium nodulans (strain LMG 21967 / CNCM I-2342 / ORS 2060).